We begin with the raw amino-acid sequence, 274 residues long: Glutamate racemase (274 aa).

Residues 9–10 (DS) and 41–42 (YG) each bind substrate. C72 acts as the Proton donor/acceptor in catalysis. Substrate is bound at residue 73–74 (NT). C184 functions as the Proton donor/acceptor in the catalytic mechanism. Position 185–186 (185–186 (TH)) interacts with substrate.

This sequence belongs to the aspartate/glutamate racemases family.

The catalysed reaction is L-glutamate = D-glutamate. Its pathway is cell wall biogenesis; peptidoglycan biosynthesis. Provides the (R)-glutamate required for cell wall biosynthesis. The sequence is that of Glutamate racemase from Oceanobacillus iheyensis (strain DSM 14371 / CIP 107618 / JCM 11309 / KCTC 3954 / HTE831).